A 343-amino-acid polypeptide reads, in one-letter code: Nod factor export ATP-binding protein I (343 aa).

Residues 1–14 (MQLLTRANVSSSPS) are compositionally biased toward polar residues. The interval 1–38 (MQLLTRANVSSSPSRRPESNALKQKCHGHSNADNSLSR) is disordered. The region spanning 45–275 (IELTNVSKSY…QIGCDVIEIY (231 aa)) is the ABC transporter domain. 77 to 84 (GPNGAGKS) provides a ligand contact to ATP.

It belongs to the ABC transporter superfamily. Lipooligosaccharide exporter (TC 3.A.1.102) family. In terms of assembly, the complex is composed of two ATP-binding proteins (NodI) and two transmembrane proteins (NodJ).

The protein resides in the cell inner membrane. Functionally, part of the ABC transporter complex NodIJ involved in the export of the nodulation factors (Nod factors), the bacterial signal molecules that induce symbiosis and subsequent nodulation induction. Nod factors are LCO (lipo-chitin oligosaccharide), a modified beta-1,4-linked N-acetylglucosamine oligosaccharide. This subunit is responsible for energy coupling to the transport system. The polypeptide is Nod factor export ATP-binding protein I (Sinorhizobium fredii (strain NBRC 101917 / NGR234)).